Consider the following 332-residue polypeptide: L-lactate dehydrogenase A chain (332 aa).

NAD(+) contacts are provided by residues 29–57 (GAVG…IEDK) and arginine 99. Substrate is bound by residues arginine 106, asparagine 138, and arginine 169. Residue asparagine 138 participates in NAD(+) binding. The active-site Proton acceptor is the histidine 193. Threonine 248 contributes to the substrate binding site.

Belongs to the LDH/MDH superfamily. LDH family. In terms of assembly, homotetramer.

The protein resides in the cytoplasm. It carries out the reaction (S)-lactate + NAD(+) = pyruvate + NADH + H(+). It participates in fermentation; pyruvate fermentation to lactate; (S)-lactate from pyruvate: step 1/1. Interconverts simultaneously and stereospecifically pyruvate and lactate with concomitant interconversion of NADH and NAD(+). In Pelodiscus sinensis japonicus (Chinese soft-shelled turtle), this protein is L-lactate dehydrogenase A chain (LDHA).